A 397-amino-acid chain; its full sequence is CCA-adding enzyme (397 aa).

2 residues coordinate ATP: Gly26 and Arg29. CTP contacts are provided by Gly26 and Arg29. Mg(2+) is bound by residues Asp39 and Asp41. ATP-binding residues include Arg110, Asp153, Arg156, Arg159, and Arg162. CTP is bound by residues Arg110, Asp153, Arg156, Arg159, and Arg162.

This sequence belongs to the tRNA nucleotidyltransferase/poly(A) polymerase family. Bacterial CCA-adding enzyme type 3 subfamily. Homodimer. It depends on Mg(2+) as a cofactor.

The catalysed reaction is a tRNA precursor + 2 CTP + ATP = a tRNA with a 3' CCA end + 3 diphosphate. It carries out the reaction a tRNA with a 3' CCA end + 2 CTP + ATP = a tRNA with a 3' CCACCA end + 3 diphosphate. In terms of biological role, catalyzes the addition and repair of the essential 3'-terminal CCA sequence in tRNAs without using a nucleic acid template. Adds these three nucleotides in the order of C, C, and A to the tRNA nucleotide-73, using CTP and ATP as substrates and producing inorganic pyrophosphate. tRNA 3'-terminal CCA addition is required both for tRNA processing and repair. Also involved in tRNA surveillance by mediating tandem CCA addition to generate a CCACCA at the 3' terminus of unstable tRNAs. While stable tRNAs receive only 3'-terminal CCA, unstable tRNAs are marked with CCACCA and rapidly degraded. This Bacillus cereus (strain 03BB102) protein is CCA-adding enzyme.